The sequence spans 198 residues: Sulfite reductase, dissimilatory-type subunit alpha (198 aa).

Residues cysteine 45, cysteine 64, cysteine 67, and cysteine 70 each contribute to the [4Fe-4S] cluster site. The region spanning 55–83 is the 4Fe-4S ferredoxin-type domain; the sequence is GTLSIDNKNCTRCMHCINTMPRALKIGDE.

As to quaternary structure, heterohexamer of two alpha, two beta and two gamma subunits.

In terms of biological role, part of the complex that catalyzes the reduction of sulfite to sulfide. The alpha and beta subunits may have arisen by gene duplication. They both bind 2 iron-sulfur clusters, but the alpha subunit seems to be catalytically inactive, due to substitutions along the putative substrate access channel, and because it binds sirohydrochlorin (the dematallated form of siroheme) instead of siroheme. The protein is Sulfite reductase, dissimilatory-type subunit alpha (dsrA) of Megalodesulfovibrio gigas (strain ATCC 19364 / DSM 1382 / NCIMB 9332 / VKM B-1759) (Desulfovibrio gigas).